A 166-amino-acid polypeptide reads, in one-letter code: Regulatory protein RecX (166 aa).

It belongs to the RecX family.

The protein localises to the cytoplasm. Modulates RecA activity. This Salmonella newport (strain SL254) protein is Regulatory protein RecX.